Here is a 519-residue protein sequence, read N- to C-terminus: Importin subunit alpha-5 (519 aa).

An IBB domain is found at 1 to 58; sequence MSLRPSTKTEIRRIRYKVSVDAEEGRRRREDFLVEIRKSKRNENLMKKRRVKVLPPDY. ARM repeat units follow at residues 103–143, 146–185, 188–228, 230–269, 272–311, 314–354, 357–396, and 400–439; these read SPPT…NIAS, SEHTKVVIDHGVVPLFVQLLASPDDDVREQAIWGLGNVAG, IQCR…NFFR, KPSPPFDLVKHVLPVLKRLVYSDDEQVLIDACWALSNLSD, NENIQSVIEAGVVPRLVELLQHASPVVLVPALRCIGNIVS, SQQT…NITA, EEQIQSVIDANLIPSLVNLAQHAEFDIKKEAIWAISNASV, and PNQIKYLVEQNCIKALCDILVCPDLRIILVSLGGLEMILI.

This sequence belongs to the importin alpha family. Forms a complex with importin subunit beta-1.

Its subcellular location is the nucleus envelope. Functionally, binds to conventional NLS motifs and mediates nuclear protein import across the nuclear envelope. This is Importin subunit alpha-5 from Arabidopsis thaliana (Mouse-ear cress).